We begin with the raw amino-acid sequence, 365 residues long: TD and POZ domain-containing protein 3 (365 aa).

An MATH domain is found at 19–149 (KFCYNWTISN…EDQFTICCKV (131 aa)). In terms of domain architecture, BTB spans 188–250 (TDCCLLVAGH…EMMGFIYTGK (63 aa)).

This sequence belongs to the Tdpoz family.

The chain is TD and POZ domain-containing protein 3 from Mus musculus (Mouse).